The following is a 362-amino-acid chain: Heat-inducible transcription repressor HrcA (362 aa).

The protein belongs to the HrcA family.

Its function is as follows. Negative regulator of class I heat shock genes (grpE-dnaK-dnaJ and groELS operons). Prevents heat-shock induction of these operons. This is Heat-inducible transcription repressor HrcA from Rhodopseudomonas palustris (strain BisB18).